The following is a 353-amino-acid chain: Glycerol-3-phosphate dehydrogenase [NAD(+)], cytoplasmic (353 aa).

Ala2 carries the post-translational modification Blocked amino end (Ala). Residues 11–16 (GSGNWG), Phe98, Lys121, and Ala155 each bind NAD(+). Lys121 is a substrate binding site. Residue Lys206 is the Proton acceptor of the active site. The NAD(+) site is built by Arg270 and Gln299. 270–271 (RN) is a substrate binding site.

It belongs to the NAD-dependent glycerol-3-phosphate dehydrogenase family. Homodimer.

It localises to the cytoplasm. It catalyses the reaction sn-glycerol 3-phosphate + NAD(+) = dihydroxyacetone phosphate + NADH + H(+). The protein operates within phospholipid metabolism; alpha-glycerophosphate cycle. The protein is Glycerol-3-phosphate dehydrogenase [NAD(+)], cytoplasmic of Drosophila virilis (Fruit fly).